Here is a 655-residue protein sequence, read N- to C-terminus: p-hydroxybenzoic acid efflux pump subunit AaeB (655 aa).

Transmembrane regions (helical) follow at residues 13–33, 38–58, 69–89, 93–113, 121–141, 152–172, 370–390, 407–427, 431–451, 459–479, and 482–502; these read FAVK…HFQL, WAVL…GGEP, LRII…IAMI, LLMI…SSLV, WGLA…EPLL, EIVI…PRSI, LFWL…IAVV, FIYG…VIIP, QSML…GIEV, MGAL…TFHF, and FLDS…VILL.

It belongs to the aromatic acid exporter ArAE (TC 2.A.85) family.

Its subcellular location is the cell inner membrane. Its function is as follows. Forms an efflux pump with AaeA. Could function as a metabolic relief valve, allowing to eliminate certain compounds when they accumulate to high levels in the cell. The chain is p-hydroxybenzoic acid efflux pump subunit AaeB from Shigella boydii serotype 18 (strain CDC 3083-94 / BS512).